Reading from the N-terminus, the 465-residue chain is ATP synthase subunit beta 2 (465 aa).

148–155 (GGAGVGKT) provides a ligand contact to ATP.

It belongs to the ATPase alpha/beta chains family. F-type ATPases have 2 components, CF(1) - the catalytic core - and CF(0) - the membrane proton channel. CF(1) has five subunits: alpha(3), beta(3), gamma(1), delta(1), epsilon(1). CF(0) has three main subunits: a(1), b(2) and c(9-12). The alpha and beta chains form an alternating ring which encloses part of the gamma chain. CF(1) is attached to CF(0) by a central stalk formed by the gamma and epsilon chains, while a peripheral stalk is formed by the delta and b chains.

It is found in the cell inner membrane. It catalyses the reaction ATP + H2O + 4 H(+)(in) = ADP + phosphate + 5 H(+)(out). Its function is as follows. Produces ATP from ADP in the presence of a proton gradient across the membrane. The catalytic sites are hosted primarily by the beta subunits. This chain is ATP synthase subunit beta 2, found in Psychromonas ingrahamii (strain DSM 17664 / CCUG 51855 / 37).